The chain runs to 269 residues: Cytochrome c oxidase subunit 3 (269 aa).

7 helical membrane-spanning segments follow: residues 24–44 (FYNS…MHGF), 46–66 (NMYI…TLWF), 90–110 (GVGL…WTFF), 132–152 (IDPF…GVTV), 167–187 (ALYG…FQGI), 207–227 (FSTG…SVGL), and 247–267 (ILYW…IYFW).

This sequence belongs to the cytochrome c oxidase subunit 3 family. As to quaternary structure, component of the cytochrome c oxidase (complex IV, CIV), a multisubunit enzyme composed of a catalytic core of 3 subunits and several supernumerary subunits. The complex exists as a monomer or a dimer and forms supercomplexes (SCs) in the inner mitochondrial membrane with ubiquinol-cytochrome c oxidoreductase (cytochrome b-c1 complex, complex III, CIII).

It localises to the mitochondrion inner membrane. The catalysed reaction is 4 Fe(II)-[cytochrome c] + O2 + 8 H(+)(in) = 4 Fe(III)-[cytochrome c] + 2 H2O + 4 H(+)(out). In terms of biological role, component of the cytochrome c oxidase, the last enzyme in the mitochondrial electron transport chain which drives oxidative phosphorylation. The respiratory chain contains 3 multisubunit complexes succinate dehydrogenase (complex II, CII), ubiquinol-cytochrome c oxidoreductase (cytochrome b-c1 complex, complex III, CIII) and cytochrome c oxidase (complex IV, CIV), that cooperate to transfer electrons derived from NADH and succinate to molecular oxygen, creating an electrochemical gradient over the inner membrane that drives transmembrane transport and the ATP synthase. Cytochrome c oxidase is the component of the respiratory chain that catalyzes the reduction of oxygen to water. Electrons originating from reduced cytochrome c in the intermembrane space (IMS) are transferred via the dinuclear copper A center (CU(A)) of subunit 2 and heme A of subunit 1 to the active site in subunit 1, a binuclear center (BNC) formed by heme A3 and copper B (CU(B)). The BNC reduces molecular oxygen to 2 water molecules using 4 electrons from cytochrome c in the IMS and 4 protons from the mitochondrial matrix. The polypeptide is Cytochrome c oxidase subunit 3 (COXIII) (Trichophyton rubrum (Athlete's foot fungus)).